Consider the following 331-residue polypeptide: Small ribosomal subunit protein uS2 (331 aa).

It belongs to the universal ribosomal protein uS2 family.

The sequence is that of Small ribosomal subunit protein uS2 from Rhodopseudomonas palustris (strain BisB5).